The chain runs to 505 residues: Putative heat shock protein HSP 90-beta 4 (505 aa).

ATP is bound by residues Asn22, Lys83, and Phe109. Residues 197-248 (EKEISDDEEEKGEKEEEDKDDKEKPKTEDVGSDEEDDTDKNNKKKTKKIKEK) are disordered. Over residues 200-216 (ISDDEEEKGEKEEEDKD) the composition is skewed to acidic residues.

It belongs to the heat shock protein 90 family. In terms of assembly, homodimer.

The protein localises to the cytoplasm. Its function is as follows. Putative molecular chaperone that may promote the maturation, structural maintenance and proper regulation of specific target proteins. The chain is Putative heat shock protein HSP 90-beta 4 (HSP90AB4P) from Homo sapiens (Human).